We begin with the raw amino-acid sequence, 524 residues long: uncharacterized protein (524 aa).

Residues 13–33 (EFILLILGMTVVGIVITMGLV) traverse the membrane as a helical segment.

It is found in the membrane. This is an uncharacterized protein from Methanocaldococcus jannaschii (strain ATCC 43067 / DSM 2661 / JAL-1 / JCM 10045 / NBRC 100440) (Methanococcus jannaschii).